We begin with the raw amino-acid sequence, 240 residues long: MSSTSKVESAKKLAAYKAVDENFPKDAKVIGIGSGSTVIYAAERIGQLDNKDSFICIPTGFQSKQLIIDNGLRLGTIEQYPDIDIAFDGADEVDPQLNLIKGGGACLFQEKLVAASAKKFVVVADYRKKSDKLGQSWRQGVPIEIVPNSYSKIIQELSKKLGAKNVDLRQGGKAKAGPIITDNNNFLLDADFGEIEIDNVGKLHEQIKLLVGVVETGLFTNMANKAYFGEEDGSVSVWSK.

Residues 34-37 (SGST), 88-91 (DGAD), and 101-104 (KGGG) contribute to the substrate site. E110 functions as the Proton acceptor in the catalytic mechanism. K128 serves as a coordination point for substrate.

It belongs to the ribose 5-phosphate isomerase family.

It localises to the cytoplasm. It catalyses the reaction aldehydo-D-ribose 5-phosphate = D-ribulose 5-phosphate. It functions in the pathway carbohydrate degradation; pentose phosphate pathway; D-ribose 5-phosphate from D-ribulose 5-phosphate (non-oxidative stage): step 1/1. Functionally, involved in the first step of the non-oxidative branch of the pentose phosphate pathway. It catalyzes the reversible conversion of ribose-5-phosphate to ribulose 5-phosphate. The chain is Ribose-5-phosphate isomerase (RKI1) from Candida albicans (strain SC5314 / ATCC MYA-2876) (Yeast).